Reading from the N-terminus, the 140-residue chain is Hexon-interlacing protein (140 aa).

Residues 100 to 127 (LTALLAQLDSLTRELNVVSQQLLDLRQQ) are a coiled coil. A Phosphoserine; by host modification is found at serine 135.

It belongs to the adenoviridae hexon-interlacing protein family. Homotrimer. Interacts with hexon protein; this interaction tethers the hexons together. Self-interacts with adjacent proteins. Interacts with kinesin light chain KLC1; this interaction leads to capsid disruption at the nuclear pore complex during virus entry into host cell.

It localises to the virion. Its subcellular location is the host nucleus. Functionally, structural component of the virion that forms triskelion structures consisting of three molecules that stabilize three hexon trimers at the center of each icosahedral facet and fixes the peripentonal hexons. Dispensable for assembly. During virus entry, recruits the anterograde motor kinesin-1 to the capsid docked at the nuclear pore complex thereby subjecting the docked capsid to a pulling force. The resulting tension leads to capsid disruption, dispersion of capsid fragments toward cell periphery and eventually viral DNA entry into the host nucleus. The sequence is that of Hexon-interlacing protein from Human adenovirus C serotype 2 (HAdV-2).